The chain runs to 922 residues: Golgi-associated RAB2 interactor protein 5B (922 aa).

6 disordered regions span residues 244–264 (DVRKKPAEKKSHSDPRPDRTH), 292–317 (QSSPKACTSASDEATGQGHVVESPSH), 373–404 (TPYSSIPRGREKAGPMGSHQGPGPPPCQKAPS), 424–597 (AVPA…TQET), 758–830 (QPES…LRPS), and 842–869 (ATARASQQPKRVSQEPMRMPAQHPLATV). A compositionally biased stretch (polar residues) spans 292 to 305 (QSSPKACTSASDEA). The span at 431-441 (KPPPGLAPPQK) shows a compositional bias: pro residues. Low complexity-rich tracts occupy residues 442–458 (APAASAPPRKAPAVPAP) and 471–495 (KAPAIPAPSRKASAASASPRKASAV). Pro residues predominate over residues 496–507 (PAPPQKTPPPSQ). Residues 758-788 (QPESHTWVKEGKRPWGEMKEQPWGEMKEPPW) are compositionally biased toward basic and acidic residues.

The protein belongs to the GARIN family.

The protein is Golgi-associated RAB2 interactor protein 5B of Homo sapiens (Human).